Here is a 330-residue protein sequence, read N- to C-terminus: MNLQQKLAQFPRLDLVGSATPLEKLSRLSDYLGREIYIKRDDVTPMAMGGNKLRKLEFLAADALRQGADTLVTAGAIQSNHVRQTAAVAAKLGLHCVALLENPIDTQEENYLTNGNRLLLGLFNAQVEMCEALHDPQQQLADLATRLEAQGFRPYVVPVGGSNALGALGYVQCALEIAEQSQRSNVAFSSVVVASGSAGTHAGLAVGLQQLLPETELVGVTVSRKVIDQLPKVEQIQKALANSLAIDELAPITLWDDYFAPQYGMPNEEGLAAIQLLAQQEGVLLDPVYSGKAMAGLIDGVAQQRFRDDGPILFIHTGGAPALFAYHPQV.

K52 is subject to N6-(pyridoxal phosphate)lysine.

The protein belongs to the ACC deaminase/D-cysteine desulfhydrase family. Homodimer. Requires pyridoxal 5'-phosphate as cofactor.

It carries out the reaction D-cysteine + H2O = hydrogen sulfide + pyruvate + NH4(+) + H(+). Catalyzes the alpha,beta-elimination reaction of D-cysteine and of several D-cysteine derivatives. It could be a defense mechanism against D-cysteine. In Serratia proteamaculans (strain 568), this protein is D-cysteine desulfhydrase.